Consider the following 299-residue polypeptide: tRNA dimethylallyltransferase (299 aa).

Position 13–20 (13–20 (GPTASGKT)) interacts with ATP. Residue 15-20 (TASGKT) participates in substrate binding. Residues 38-41 (DSRQ) are interaction with substrate tRNA.

The protein belongs to the IPP transferase family. In terms of assembly, monomer. Mg(2+) serves as cofactor.

It carries out the reaction adenosine(37) in tRNA + dimethylallyl diphosphate = N(6)-dimethylallyladenosine(37) in tRNA + diphosphate. In terms of biological role, catalyzes the transfer of a dimethylallyl group onto the adenine at position 37 in tRNAs that read codons beginning with uridine, leading to the formation of N6-(dimethylallyl)adenosine (i(6)A). This is tRNA dimethylallyltransferase from Parasynechococcus marenigrum (strain WH8102).